Consider the following 86-residue polypeptide: Progonadoliberin-2 (86 aa).

The first 24 residues, M1–S24, serve as a signal peptide directing secretion. Q25 bears the Pyrrolidone carboxylic acid mark. G34 bears the Glycine amide mark.

It belongs to the GnRH family.

The protein localises to the secreted. Stimulates the secretion of gonadotropins. The chain is Progonadoliberin-2 (gnrh2) from Oncorhynchus mykiss (Rainbow trout).